Reading from the N-terminus, the 193-residue chain is Zinc finger protein 740 (193 aa).

Residues 33–75 (SKQAENGERAGSPDVLRCSSQGHRKDSDKSRSRKDDDSLSEAS) are disordered. Lysine 34 is covalently cross-linked (Glycyl lysine isopeptide (Lys-Gly) (interchain with G-Cter in SUMO2)). Serine 44 carries the phosphoserine modification. Over residues 55-69 (HRKDSDKSRSRKDDD) the composition is skewed to basic and acidic residues. C2H2-type zinc fingers lie at residues 101-123 (FVCE…ILIH) and 129-151 (FECD…KRVH). The C2H2-type 3; atypical zinc-finger motif lies at 157–179 (YQCERCHQCFSRTDRLLRHKRMC).

It belongs to the krueppel C2H2-type zinc-finger protein family.

Its subcellular location is the nucleus. Functionally, may be involved in transcriptional regulation. This chain is Zinc finger protein 740 (ZNF740), found in Homo sapiens (Human).